The sequence spans 1404 residues: DNA-directed RNA polymerase subunit beta' (1404 aa).

Zn(2+)-binding residues include Cys-70, Cys-72, Cys-85, and Cys-88. Mg(2+) is bound by residues Asp-460, Asp-462, and Asp-464. Zn(2+)-binding residues include Cys-814, Cys-888, Cys-895, and Cys-898.

The protein belongs to the RNA polymerase beta' chain family. The RNAP catalytic core consists of 2 alpha, 1 beta, 1 beta' and 1 omega subunit. When a sigma factor is associated with the core the holoenzyme is formed, which can initiate transcription. Mg(2+) serves as cofactor. The cofactor is Zn(2+).

It carries out the reaction RNA(n) + a ribonucleoside 5'-triphosphate = RNA(n+1) + diphosphate. In terms of biological role, DNA-dependent RNA polymerase catalyzes the transcription of DNA into RNA using the four ribonucleoside triphosphates as substrates. The polypeptide is DNA-directed RNA polymerase subunit beta' (Shewanella piezotolerans (strain WP3 / JCM 13877)).